Reading from the N-terminus, the 387-residue chain is 3-ketoacyl-CoA thiolase (387 aa).

Cys91 functions as the Acyl-thioester intermediate in the catalytic mechanism. Residues His343 and Cys373 each act as proton acceptor in the active site.

This sequence belongs to the thiolase-like superfamily. Thiolase family. Heterotetramer of two alpha chains (FadB) and two beta chains (FadA).

The protein resides in the cytoplasm. The enzyme catalyses an acyl-CoA + acetyl-CoA = a 3-oxoacyl-CoA + CoA. The protein operates within lipid metabolism; fatty acid beta-oxidation. Functionally, catalyzes the final step of fatty acid oxidation in which acetyl-CoA is released and the CoA ester of a fatty acid two carbons shorter is formed. In Vibrio vulnificus (strain YJ016), this protein is 3-ketoacyl-CoA thiolase.